A 555-amino-acid chain; its full sequence is NAD-dependent protein deacetylase sirtuin-1 (555 aa).

A Nuclear localization signal motif is present at residues 39-46 (PPKRKKRK). The Deacetylase sirtuin-type domain maps to 44-304 (KRKDINTIED…NELCHRLGGE (261 aa)). Residue Lys-46 is modified to N6-acetyllysine. The required for interaction with the sumoylated form of CCAR2 stretch occupies residues 64–67 (IIVL). NAD(+) is bound by residues 69 to 88 (GAGVSVSCGIPDFRSRDGIY) and 153 to 156 (QNID). His-171 functions as the Proton acceptor in the catalytic mechanism. Cys-179 and Cys-182 together coordinate Zn(2+). The residue at position 185 (Lys-185) is an N6-acetyllysine. Zn(2+) contacts are provided by Cys-203 and Cys-206. 2 positions are modified to S-nitrosocysteine: Cys-203 and Cys-206. Residue Lys-238 is modified to N6-acetyllysine. The Nuclear export signal signature appears at 241–247 (VDLLIVI). NAD(+)-binding positions include 248-250 (GSS), 273-275 (NRE), and Cys-290. At Lys-321 the chain carries N6-acetyllysine. Positions 335-354 (LPPTPLHISEDSSSPERTVP) are disordered. Thr-338 is modified (phosphothreonine). A Phosphoserine modification is found at Ser-343. Polar residues predominate over residues 345-354 (DSSSPERTVP). Thr-352 bears the Phosphothreonine mark. The residue at position 417 (Lys-417) is an N6-acetyllysine. Residues Ser-466 and Ser-468 each carry the phosphoserine modification. The tract at residues 469 to 529 (EDDALSSSSC…GGSGADGGDQ (61 aa)) is disordered. Over residues 473–493 (LSSSSCGSNSDSGTCQSPSLE) the composition is skewed to low complexity. Over residues 494-514 (EPLEDESEIEEFYNGLEDDAD) the composition is skewed to acidic residues. The residue at position 552 (Ser-552) is a Phosphoserine.

It belongs to the sirtuin family. Class I subfamily. In terms of assembly, interacts with XBP1 isoform 2. Found in a complex with PCAF and MYOD1. Interacts with FOXO1; the interaction deacetylates FOXO1, resulting in its nuclear retention and promotion of its transcriptional activity Component of the eNoSC complex, composed of SIRT1, SUV39H1 and RRP8. Interacts with HES1, HEY2 and PML. Interacts with RPS19BP1/AROS. Interacts with CCAR2 (via N-terminus); the interaction disrupts the interaction between SIRT1 and p53/TP53. Interacts with SETD7; the interaction induces the dissociation of SIRT1 from p53/TP53 and increases p53/TP53 activity. Interacts with MYCN, NR1I2, CREBZF, TSC2, TLE1, FOS, JUN, NR0B2, PPARG, NCOR, IRS1, IRS2 and NMNAT1. Interacts with HNF1A; the interaction occurs under nutrient restriction. Interacts with SUZ12; the interaction mediates the association with the PRC4 histone methylation complex which is specific as an association with PCR2 and PCR3 complex variants is not found. Interacts with HIV-1 tat. Interacts with BCL6; leads to a epigenetic repression of specific target genes. Interacts with CLOCK, BMAL1 and PER2. Interacts with PPARA; the interaction seems to be modulated by NAD(+) levels. Interacts with NR1H3 and this interaction is inhibited in the presence of CCAR2. Interacts with CHEK2. Interacts with p53/TP53. Exhibits a preferential interaction with sumoylated CCAR2 over its unmodified form. Interacts with PACS2. Interacts with SIRT7. Interacts with PUS7. Interacts with TULP3. Interacts with MORN3; the interaction enhances the ubiquitination of p53/TP53. The cofactor is Zn(2+). In terms of processing, methylated on multiple lysine residues; methylation is enhanced after DNA damage and is dispensable for deacetylase activity toward p53/TP53. Post-translationally, phosphorylated. Phosphorylated by STK4/MST1, resulting in inhibition of SIRT1-mediated p53/TP53 deacetylation. Phosphorylation by MAPK8/JNK1 at Thr-338 leads to increased nuclear localization and enzymatic activity. Phosphorylation at Thr-338 by DYRK1A and DYRK3 activates deacetylase activity and promotes cell survival. Phosphorylated by CaMK2, leading to increased p53/TP53 and NF-kappa-B p65/RELA deacetylation activity. S-nitrosylated by GAPDH, leading to inhibit the NAD-dependent protein deacetylase activity. In terms of processing, acetylated at various Lys residues. Deacetylated via an autocatalytic mechanism. Autodeacetylation at Lys-46 promotes its protein deacetylase activity. Post-translationally, ubiquitinated; leading to degradation. Deubiquitinated by USP22; leading to stabilization.

The protein localises to the nucleus. Its subcellular location is the PML body. The protein resides in the cytoplasm. The enzyme catalyses N(6)-acetyl-L-lysyl-[protein] + NAD(+) + H2O = 2''-O-acetyl-ADP-D-ribose + nicotinamide + L-lysyl-[protein]. It catalyses the reaction N(6)-propanoyl-L-lysyl-[protein] + NAD(+) + H2O = 3''-O-propanoyl-ADP-D-ribose + nicotinamide + L-lysyl-[protein]. It carries out the reaction N(6)-(2E)-butenoyl-L-lysyl-[protein] + NAD(+) + H2O = 2''-O-(2E)-but-2-enoyl-ADP-D-ribose + nicotinamide + L-lysyl-[protein]. With respect to regulation, inhibited by nicotinamide. Activated by resveratrol (3,5,4'-trihydroxy-trans-stilbene), butein (3,4,2',4'-tetrahydroxychalcone), piceatannol (3,5,3',4'-tetrahydroxy-trans-stilbene), Isoliquiritigenin (4,2',4'-trihydroxychalcone), fisetin (3,7,3',4'-tetrahydroxyflavone) and quercetin (3,5,7,3',4'-pentahydroxyflavone). MAPK8/JNK1 and RPS19BP1/AROS act as positive regulators of deacetylation activity. Negatively regulated by CCAR2. NAD-dependent protein deacetylase that links transcriptional regulation directly to intracellular energetics and participates in the coordination of several separated cellular functions such as cell cycle, response to DNA damage, metabolism, apoptosis and autophagy. Can modulate chromatin function through deacetylation of histones and can promote alterations in the methylation of histones and DNA, leading to transcriptional repression. Deacetylates a broad range of transcription factors and coregulators, thereby regulating target gene expression positively and negatively. Serves as a sensor of the cytosolic ratio of NAD(+)/NADH which is altered by glucose deprivation and metabolic changes associated with caloric restriction. Is essential in skeletal muscle cell differentiation and in response to low nutrients mediates the inhibitory effect on skeletal myoblast differentiation which also involves 5'-AMP-activated protein kinase (AMPK) and nicotinamide phosphoribosyltransferase (NAMPT). Component of the eNoSC (energy-dependent nucleolar silencing) complex, a complex that mediates silencing of rDNA in response to intracellular energy status and acts by recruiting histone-modifying enzymes. The eNoSC complex is able to sense the energy status of cell: upon glucose starvation, elevation of NAD(+)/NADP(+) ratio activates SIRT1, leading to histone H3 deacetylation followed by dimethylation of H3 at 'Lys-9' (H3K9me2) by SUV39H1 and the formation of silent chromatin in the rDNA locus. Deacetylates 'Lys-266' of SUV39H1, leading to its activation. Inhibits skeletal muscle differentiation by deacetylating PCAF and MYOD1. Deacetylates H2A and 'Lys-26' of H1-4. Deacetylates 'Lys-16' of histone H4 (in vitro). Involved in NR0B2/SHP corepression function through chromatin remodeling: Recruited to LRH1 target gene promoters by NR0B2/SHP thereby stimulating histone H3 and H4 deacetylation leading to transcriptional repression. Proposed to contribute to genomic integrity via positive regulation of telomere length; however, reports on localization to pericentromeric heterochromatin are conflicting. Proposed to play a role in constitutive heterochromatin (CH) formation and/or maintenance through regulation of the available pool of nuclear SUV39H1. Upon oxidative/metabolic stress decreases SUV39H1 degradation by inhibiting SUV39H1 polyubiquitination by MDM2. This increase in SUV39H1 levels enhances SUV39H1 turnover in CH, which in turn seems to accelerate renewal of the heterochromatin which correlates with greater genomic integrity during stress response. Deacetylates 'Lys-382' of p53/TP53 and impairs its ability to induce transcription-dependent proapoptotic program and modulate cell senescence. Deacetylates TAF1B and thereby represses rDNA transcription by the RNA polymerase I. Deacetylates MYC, promotes the association of MYC with MAX and decreases MYC stability leading to compromised transformational capability. Deacetylates FOXO3 in response to oxidative stress thereby increasing its ability to induce cell cycle arrest and resistance to oxidative stress but inhibiting FOXO3-mediated induction of apoptosis transcriptional activity; also leading to FOXO3 ubiquitination and protesomal degradation. Appears to have a similar effect on MLLT7/FOXO4 in regulation of transcriptional activity and apoptosis. Deacetylates DNMT1; thereby impairs DNMT1 methyltransferase-independent transcription repressor activity, modulates DNMT1 cell cycle regulatory function and DNMT1-mediated gene silencing. Deacetylates RELA/NF-kappa-B p65 thereby inhibiting its transactivating potential and augments apoptosis in response to TNF-alpha. Deacetylates HIF1A, KAT5/TIP60, RB1 and HIC1. Deacetylates FOXO1 resulting in its nuclear retention and enhancement of its transcriptional activity leading to increased gluconeogenesis in liver. Inhibits E2F1 transcriptional activity and apoptotic function, possibly by deacetylation. Involved in HES1- and HEY2-mediated transcriptional repression. In cooperation with MYCN seems to be involved in transcriptional repression of DUSP6/MAPK3 leading to MYCN stabilization by phosphorylation at 'Ser-62'. Deacetylates MEF2D. Required for antagonist-mediated transcription suppression of AR-dependent genes which may be linked to local deacetylation of histone H3. Represses HNF1A-mediated transcription. Required for the repression of ESRRG by CREBZF. Deacetylates NR1H3 AND NR1H2 and deacetylation of NR1H3 at 'Lys-434' positively regulates transcription of NR1H3:RXR target genes, promotes NR1H3 proteasomal degradation and results in cholesterol efflux; a promoter clearing mechanism after reach round of transcription is proposed. Involved in lipid metabolism: deacetylates LPIN1, thereby inhibiting diacylglycerol synthesis. Implicated in regulation of adipogenesis and fat mobilization in white adipocytes by repression of PPARG which probably involves association with NCOR1 and SMRT/NCOR2. Deacetylates p300/EP300 and PRMT1. Deacetylates ACSS2 leading to its activation, and HMGCS1 deacetylation. Involved in liver and muscle metabolism. Through deacetylation and activation of PPARGC1A is required to activate fatty acid oxidation in skeletal muscle under low-glucose conditions and is involved in glucose homeostasis. Involved in regulation of PPARA and fatty acid beta-oxidation in liver. Involved in positive regulation of insulin secretion in pancreatic beta cells in response to glucose; the function seems to imply transcriptional repression of UCP2. Proposed to deacetylate IRS2 thereby facilitating its insulin-induced tyrosine phosphorylation. Deacetylates SREBF1 isoform SREBP-1C thereby decreasing its stability and transactivation in lipogenic gene expression. Involved in DNA damage response by repressing genes which are involved in DNA repair, such as XPC and TP73, deacetylating XRCC6/Ku70, and facilitating recruitment of additional factors to sites of damaged DNA, such as SIRT1-deacetylated NBN can recruit ATM to initiate DNA repair and SIRT1-deacetylated XPA interacts with RPA2. Also involved in DNA repair of DNA double-strand breaks by homologous recombination and specifically single-strand annealing independently of XRCC6/Ku70 and NBN. Promotes DNA double-strand breaks by mediating deacetylation of SIRT6. Transcriptional suppression of XPC probably involves an E2F4:RBL2 suppressor complex and protein kinase B (AKT) signaling. Transcriptional suppression of TP73 probably involves E2F4 and PCAF. Deacetylates WRN thereby regulating its helicase and exonuclease activities and regulates WRN nuclear translocation in response to DNA damage. Deacetylates APEX1 at 'Lys-6' and 'Lys-7' and stimulates cellular AP endonuclease activity by promoting the association of APEX1 to XRCC1. Catalyzes deacetylation of ERCC4/XPF, thereby impairing interaction with ERCC1 and nucleotide excision repair (NER). Increases p53/TP53-mediated transcription-independent apoptosis by blocking nuclear translocation of cytoplasmic p53/TP53 and probably redirecting it to mitochondria. Deacetylates XRCC6/Ku70 at 'Lys-539' and 'Lys-542' causing it to sequester BAX away from mitochondria thereby inhibiting stress-induced apoptosis. Is involved in autophagy, presumably by deacetylating ATG5, ATG7 and MAP1LC3B/ATG8. Deacetylates AKT1 which leads to enhanced binding of AKT1 and PDK1 to PIP3 and promotes their activation. Proposed to play role in regulation of STK11/LBK1-dependent AMPK signaling pathways implicated in cellular senescence which seems to involve the regulation of the acetylation status of STK11/LBK1. Can deacetylate STK11/LBK1 and thereby increase its activity, cytoplasmic localization and association with STRAD; however, the relevance of such activity in normal cells is unclear. In endothelial cells is shown to inhibit STK11/LBK1 activity and to promote its degradation. Deacetylates SMAD7 at 'Lys-64' and 'Lys-70' thereby promoting its degradation. Deacetylates CIITA and augments its MHC class II transactivation and contributes to its stability. Deacetylates MECOM/EVI1. Deacetylates PML at 'Lys-487' and this deacetylation promotes PML control of PER2 nuclear localization. During the neurogenic transition, represses selective NOTCH1-target genes through histone deacetylation in a BCL6-dependent manner and leading to neuronal differentiation. Regulates the circadian expression of several core clock genes, including BMAL1, RORC, PER2 and CRY1 and plays a critical role in maintaining a controlled rhythmicity in histone acetylation, thereby contributing to circadian chromatin remodeling. Deacetylates BMAL1 and histones at the circadian gene promoters in order to facilitate repression by inhibitory components of the circadian oscillator. Deacetylates PER2, facilitating its ubiquitination and degradation by the proteasome. Protects cardiomyocytes against palmitate-induced apoptosis. Deacetylates XBP1 isoform 2; deacetylation decreases protein stability of XBP1 isoform 2 and inhibits its transcriptional activity. Deacetylates PCK1 and directs its activity toward phosphoenolpyruvate production promoting gluconeogenesis. Involved in the CCAR2-mediated regulation of PCK1 and NR1D1. Deacetylates CTNB1 at 'Lys-49'. In POMC (pro-opiomelanocortin) neurons, required for leptin-induced activation of PI3K signaling. In addition to protein deacetylase activity, also acts as a protein-lysine deacylase by mediating protein depropionylation and decrotonylation. Mediates depropionylation of Osterix (SP7). Catalyzes decrotonylation of histones; it however does not represent a major histone decrotonylase. Deacetylates SOX9; promoting SOX9 nuclear localization and transactivation activity. Involved in the regulation of centrosome duplication. Deacetylates CENATAC in G1 phase, allowing for SASS6 accumulation on the centrosome and subsequent procentriole assembly. Deacetylates NDC80/HEC1. This chain is NAD-dependent protein deacetylase sirtuin-1, found in Rattus norvegicus (Rat).